A 405-amino-acid polypeptide reads, in one-letter code: Homocitrate synthase AksA (405 aa).

One can recognise a Pyruvate carboxyltransferase domain in the interval Ile23 to Thr274.

Belongs to the alpha-IPM synthase/homocitrate synthase family.

The enzyme catalyses acetyl-CoA + 2-oxoglutarate + H2O = (2R)-homocitrate + CoA + H(+). The catalysed reaction is 2-oxoadipate + acetyl-CoA + H2O = (R)-dihomocitrate + CoA + H(+). It catalyses the reaction 2-oxoheptanedioate + acetyl-CoA + H2O = (R)-trihomocitrate + CoA + H(+). The protein operates within organic acid metabolism; 2-oxosuberate biosynthesis. Catalyzes the condensation of alpha-ketoglutarate and acetyl-CoA to form (R)-homocitrate. Can also catalyze the condensation of alpha-ketoadipate with acetyl-CoA to form (R)-homo(2)citrate, and the condensation of alpha-ketopimelate with acetyl-CoA to form (R)-homo(3)citrate. These reactions are part of the biosynthesis pathway of coenzyme B and biotin. In Methanosarcina acetivorans (strain ATCC 35395 / DSM 2834 / JCM 12185 / C2A), this protein is Homocitrate synthase AksA (aksA).